A 1138-amino-acid polypeptide reads, in one-letter code: uncharacterized protein (1138 aa).

Residues 1–28 form the signal peptide; the sequence is MKLFPRSILIILVLSFALNLGLVTKTHA. The next 7 helical transmembrane spans lie at 331-351, 359-379, 392-412, 494-514, 520-540, 554-574, and 699-719; these read IVTAFLTLYVMFFGFKLLLAG, YINFILKMIFVTYFSIGINIT, MIQWAFPFLLDGINGLASWVM, MLVSLALSYPLLVISVAAFMV, CMISIVILGILAPLFVPMFLF, MISFLLQPMVVVTFMITMFSV, and IKNILLALVTACFTLYLMYNF. The span at 775–784 shows a compositional bias: gly residues; sequence DLKAGQGGGV. Disordered stretches follow at residues 775–914, 958–977, and 995–1071; these read DLKA…KGTG, GGGRIRDQQGEETSERRTNA, and ERDN…KQIR. Low complexity predominate over residues 801–830; the sequence is AASGGTSAPTVTTPTASSSVATSSPKTVSS. Residues 838–852 are compositionally biased toward pro residues; sequence TPPPAPSEAVSPPPA. The segment covering 854–869 has biased composition (polar residues); it reads IRTSISTPAPQSNIET. 4 stretches are compositionally biased toward basic and acidic residues: residues 875–888, 961–977, 995–1032, and 1058–1071; these read IIRDNNQESKKEID, RIRDQQGEETSERRTNA, ERDNSVTNKFDKLADELNKSEKAKVEENKNIENDRKEN, and LKEHENPTGVKQIR.

It belongs to the TrbL/VirB6 family.

The protein resides in the cell membrane. This is an uncharacterized protein from Rickettsia felis (strain ATCC VR-1525 / URRWXCal2) (Rickettsia azadi).